The primary structure comprises 172 residues: Probable tryptophan transport protein (172 aa).

The next 4 membrane-spanning stretches (helical) occupy residues 7 to 29 (VIMALFAAIGAALHSIIPPFLGG), 49 to 71 (VQNVLVIGIVTGIISALTTAFPA), 104 to 126 (AVLTVIGTILSGIVFLSSALLIV), and 136 to 158 (FAAVVLPAAVLNTISMIIIYPIV).

It belongs to the vitamin uptake transporter (VUT/ECF) (TC 2.A.88) family. TrpP subfamily.

It is found in the cell membrane. Its function is as follows. Probably involved in tryptophan uptake. In Bacillus subtilis (strain 168), this protein is Probable tryptophan transport protein (trpP).